We begin with the raw amino-acid sequence, 127 residues long: Holotricin-2 (127 aa).

Residues 1-15 (MMKLVIALCLIGISA) form the signal peptide. The propeptide occupies 16 to 55 (AYVVPVYYEIYPEDATFDEADIEPQLSPAELHHGSIRERR). The disordered stretch occupies residues 43-84 (PAELHHGSIRERRSLQPGAPSFPMPGSQLPTSVSGNVEKQGR). Basic and acidic residues predominate over residues 45 to 56 (ELHHGSIRERRS). Residues 70-84 (QLPTSVSGNVEKQGR) are compositionally biased toward polar residues.

It belongs to the coleoptericin family. In terms of tissue distribution, hemolymph.

It localises to the secreted. In terms of biological role, antibacterial activity against Gram-negative bacteria but not against Gram-positive bacteria. The sequence is that of Holotricin-2 from Holotrichia diomphalia (Korean black chafer).